Consider the following 43-residue polypeptide: Protein PsbN (43 aa).

A helical membrane pass occupies residues 7-27 (IAIFISCLIVSFTGYALYTAF).

The protein belongs to the PsbN family.

The protein localises to the plastid. Its subcellular location is the chloroplast thylakoid membrane. In terms of biological role, may play a role in photosystem I and II biogenesis. In Psilotum nudum (Whisk fern), this protein is Protein PsbN.